The following is a 571-amino-acid chain: Urease subunit alpha (571 aa).

The 440-residue stretch at 132–571 (GAIDTHIHFI…LPMGQKYFLF (440 aa)) folds into the Urease domain. 3 residues coordinate Ni(2+): His-137, His-139, and Lys-220. Lys-220 carries the N6-carboxylysine modification. His-222 serves as a coordination point for substrate. The Ni(2+) site is built by His-249 and His-275. Residue His-323 is the Proton donor of the active site. Asp-363 provides a ligand contact to Ni(2+).

The protein belongs to the metallo-dependent hydrolases superfamily. Urease alpha subunit family. In terms of assembly, heterotrimer of UreA (gamma), UreB (beta) and UreC (alpha) subunits. Three heterotrimers associate to form the active enzyme. Requires Ni cation as cofactor. Carboxylation allows a single lysine to coordinate two nickel ions.

The protein localises to the cytoplasm. The catalysed reaction is urea + 2 H2O + H(+) = hydrogencarbonate + 2 NH4(+). It participates in nitrogen metabolism; urea degradation; CO(2) and NH(3) from urea (urease route): step 1/1. The polypeptide is Urease subunit alpha (Corynebacterium urealyticum (strain ATCC 43042 / DSM 7109)).